The primary structure comprises 579 residues: Alpha-longipinene synthase (579 aa).

The Mg(2+) site is built by Asp332, Asp336, Asp476, and Asn484. The DDXXD motif motif lies at 332–336 (DDLYD).

Belongs to the terpene synthase family. Tpsd subfamily. The cofactor is Mg(2+). Mn(2+) serves as cofactor.

The enzyme catalyses (2E,6E)-farnesyl diphosphate = alpha-longipinene + diphosphate. It functions in the pathway sesquiterpene biosynthesis. The protein operates within terpene metabolism; oleoresin biosynthesis. In terms of biological role, terpene synthase (TPS) involved in the biosynthesis of sesquiterpene natural products included in conifer oleoresin secretions and volatile emissions; these compounds contribute to biotic and abiotic stress defense against herbivores and pathogens. Catalyzes the conversion of (2E,6E)-farnesyl diphosphate (FPP) to alpha-longipinene. The sequence is that of Alpha-longipinene synthase from Picea sitchensis (Sitka spruce).